Consider the following 260-residue polypeptide: Isoprenyl transferase (260 aa).

Aspartate 40 is an active-site residue. Aspartate 40 is a binding site for Mg(2+). Residues 41 to 44 (GNGR), tryptophan 45, arginine 53, histidine 57, and 85 to 87 (STE) each bind substrate. The Proton acceptor role is filled by asparagine 88. Residues tryptophan 89, arginine 91, arginine 208, and 214–216 (RLS) contribute to the substrate site. Glutamate 227 lines the Mg(2+) pocket.

The protein belongs to the UPP synthase family. As to quaternary structure, homodimer. Requires Mg(2+) as cofactor.

In terms of biological role, catalyzes the condensation of isopentenyl diphosphate (IPP) with allylic pyrophosphates generating different type of terpenoids. The polypeptide is Isoprenyl transferase (Bacillus subtilis (strain 168)).